The chain runs to 402 residues: Protein RETARDED ROOT GROWTH-LIKE (402 aa).

The chain crosses the membrane as a helical span at residues 375–395 (SATLEWLIIILISMEIAISFY).

It belongs to the RMD1/sif2 family. Highly expressed in germinating seeds and developing seedlings. Also present at low levels in seedlings, roots, leaves, stems and flowers, and barely in siliques.

The protein localises to the mitochondrion membrane. It localises to the mitochondrion. Mediates abscisic acid (ABA) signal transduction through mitochondrial retrograde regulation involving ABI4 during seed germination and seedling growth, and leading to the production of reactive oxygen species (ROS) by the alternative respiratory pathway. Required for the maintenance of mitochondrial structure. The chain is Protein RETARDED ROOT GROWTH-LIKE from Arabidopsis thaliana (Mouse-ear cress).